The following is a 233-amino-acid chain: UPF0502 protein Sden_2282 (233 aa).

Over residues 178–198 (TQHQRPPQTPHLSSRTNVDNS) the composition is skewed to polar residues. Residues 178–204 (TQHQRPPQTPHLSSRTNVDNSYESDER) are disordered.

Belongs to the UPF0502 family.

In Shewanella denitrificans (strain OS217 / ATCC BAA-1090 / DSM 15013), this protein is UPF0502 protein Sden_2282.